Here is a 692-residue protein sequence, read N- to C-terminus: ATP-dependent RNA helicase MSS116, mitochondrial (692 aa).

The N-terminal 37 residues, Met-1–Lys-37, are a transit peptide targeting the mitochondrion. The disordered stretch occupies residues Ser-82 to Lys-113. Residues Glu-89 to Lys-99 show a composition bias toward basic and acidic residues. A Q motif motif is present at residues Asp-130–Gln-158. The 188-residue stretch at Val-162–Tyr-349 folds into the Helicase ATP-binding domain. Position 175 to 182 (Ala-175 to Thr-182) interacts with ATP. A DEAD box motif is present at residues Asp-290–Asp-293. A Helicase C-terminal domain is found at Tyr-384–Asn-534. The segment at Asn-643–Glu-692 is disordered. Residues Gly-661–Ser-670 are compositionally biased toward gly residues.

It belongs to the DEAD box helicase family. DDX18/HAS1 subfamily.

It is found in the mitochondrion matrix. It catalyses the reaction ATP + H2O = ADP + phosphate + H(+). In terms of biological role, ATP-dependent RNA helicase required for mitochondrial splicing of group I and II introns. Also required for efficient mitochondrial translation. This chain is ATP-dependent RNA helicase MSS116, mitochondrial (MSS116), found in Lodderomyces elongisporus (strain ATCC 11503 / CBS 2605 / JCM 1781 / NBRC 1676 / NRRL YB-4239) (Yeast).